A 787-amino-acid polypeptide reads, in one-letter code: GPI ethanolamine phosphate transferase 2 (787 aa).

Residues Asn-33, Asn-185, and Asn-397 are each glycosylated (N-linked (GlcNAc...) asparagine). 3 consecutive transmembrane segments (helical) span residues 400 to 420 (FLTY…VWNF), 426 to 446 (YIEH…SSFI), and 455 to 475 (WITI…LVVL). Asn-485 carries N-linked (GlcNAc...) asparagine glycosylation. 2 consecutive transmembrane segments (helical) span residues 504-524 (HTSV…FPFL) and 536-556 (LLSV…FAIV). N-linked (GlcNAc...) asparagine glycosylation is present at Asn-581. Residues 591 to 611 (LVPIARIFFQICGVSIIILLF) traverse the membrane as a helical segment. N-linked (GlcNAc...) asparagine glycosylation is present at Asn-617. The chain crosses the membrane as a helical span at residues 629–651 (VIKFVLLLQTSSANIPLFLIFEI). Residue Asn-669 is glycosylated (N-linked (GlcNAc...) asparagine). 4 consecutive transmembrane segments (helical) span residues 671–693 (TFFQ…YNGV), 699–719 (IYVV…YWAL), 740–760 (GTCL…WSVF), and 767–787 (YAAW…LGVL).

It belongs to the PIGG/PIGN/PIGO family. PIGG subfamily.

The protein resides in the endoplasmic reticulum membrane. It functions in the pathway glycolipid biosynthesis; glycosylphosphatidylinositol-anchor biosynthesis. Ethanolamine phosphate transferase involved in glycosylphosphatidylinositol-anchor biosynthesis. Transfers ethanolamine phosphate to the GPI second mannose. The polypeptide is GPI ethanolamine phosphate transferase 2 (LAS21) (Kluyveromyces lactis (strain ATCC 8585 / CBS 2359 / DSM 70799 / NBRC 1267 / NRRL Y-1140 / WM37) (Yeast)).